A 211-amino-acid chain; its full sequence is Large ribosomal subunit protein uL3 (211 aa).

It belongs to the universal ribosomal protein uL3 family. In terms of assembly, part of the 50S ribosomal subunit. Forms a cluster with proteins L14 and L19.

One of the primary rRNA binding proteins, it binds directly near the 3'-end of the 23S rRNA, where it nucleates assembly of the 50S subunit. The protein is Large ribosomal subunit protein uL3 of Halothermothrix orenii (strain H 168 / OCM 544 / DSM 9562).